The primary structure comprises 237 residues: Ribonuclease 3 (237 aa).

Residues 6 to 133 (LIEVEKLIGI…VIAAVYLDKG (128 aa)) form the RNase III domain. E46 provides a ligand contact to Mg(2+). Residue D50 is part of the active site. Residues D119 and E122 each coordinate Mg(2+). E122 is an active-site residue. Residues 160-229 (DFKTRLQEVL…AKAALQRLGE (70 aa)) form the DRBM domain.

Belongs to the ribonuclease III family. As to quaternary structure, homodimer. Mg(2+) is required as a cofactor.

The protein localises to the cytoplasm. It catalyses the reaction Endonucleolytic cleavage to 5'-phosphomonoester.. Digests double-stranded RNA. Involved in the processing of primary rRNA transcript to yield the immediate precursors to the large and small rRNAs (23S and 16S). Processes some mRNAs, and tRNAs when they are encoded in the rRNA operon. Processes pre-crRNA and tracrRNA of type II CRISPR loci if present in the organism. The chain is Ribonuclease 3 from Clostridium perfringens (strain 13 / Type A).